The following is a 508-amino-acid chain: Photosystem II CP47 reaction center protein (508 aa).

A run of 6 helical transmembrane segments spans residues 21–36 (SVHIMHTALVSGWAGS), 101–115 (IVFSGLCFLAAIWHW), 140–156 (GIHLFLAGVACFGFGAF), 203–218 (IAAGTLGILAGLFHLS), 237–252 (VLSSSIAAVFFAAFVV), and 457–472 (TFALLFFFGHIWHGAR).

Belongs to the PsbB/PsbC family. PsbB subfamily. PSII is composed of 1 copy each of membrane proteins PsbA, PsbB, PsbC, PsbD, PsbE, PsbF, PsbH, PsbI, PsbJ, PsbK, PsbL, PsbM, PsbT, PsbX, PsbY, PsbZ, Psb30/Ycf12, at least 3 peripheral proteins of the oxygen-evolving complex and a large number of cofactors. It forms dimeric complexes. Requires Binds multiple chlorophylls. PSII binds additional chlorophylls, carotenoids and specific lipids. as cofactor.

It localises to the plastid. The protein resides in the chloroplast thylakoid membrane. In terms of biological role, one of the components of the core complex of photosystem II (PSII). It binds chlorophyll and helps catalyze the primary light-induced photochemical processes of PSII. PSII is a light-driven water:plastoquinone oxidoreductase, using light energy to abstract electrons from H(2)O, generating O(2) and a proton gradient subsequently used for ATP formation. This Oryza nivara (Indian wild rice) protein is Photosystem II CP47 reaction center protein.